The primary structure comprises 369 residues: 2-aminoethylphosphonate--pyruvate transaminase (369 aa).

Lys193 carries the N6-(pyridoxal phosphate)lysine modification.

It belongs to the class-V pyridoxal-phosphate-dependent aminotransferase family. PhnW subfamily. In terms of assembly, homodimer. Requires pyridoxal 5'-phosphate as cofactor.

It carries out the reaction (2-aminoethyl)phosphonate + pyruvate = phosphonoacetaldehyde + L-alanine. Functionally, involved in phosphonate degradation. In Burkholderia pseudomallei (strain K96243), this protein is 2-aminoethylphosphonate--pyruvate transaminase.